Reading from the N-terminus, the 266-residue chain is Large ribosomal subunit protein eL8 (266 aa).

Residues K11, K20, and K21 each participate in a glycyl lysine isopeptide (Lys-Gly) (interchain with G-Cter in SUMO2) cross-link. K34 is subject to N6-acetyllysine. A Glycyl lysine isopeptide (Lys-Gly) (interchain with G-Cter in SUMO2) cross-link involves residue K48. K97 bears the N6-acetyllysine; alternate mark. K97 participates in a covalent cross-link: Glycyl lysine isopeptide (Lys-Gly) (interchain with G-Cter in SUMO2); alternate. K125 is covalently cross-linked (Glycyl lysine isopeptide (Lys-Gly) (interchain with G-Cter in SUMO2)). The residue at position 217 (K217) is an N6-acetyllysine. Residue K245 forms a Glycyl lysine isopeptide (Lys-Gly) (interchain with G-Cter in SUMO2) linkage.

It belongs to the eukaryotic ribosomal protein eL8 family. As to quaternary structure, component of the large ribosomal subunit. Interacts with CRY1. Interacts with DICER1, AGO2, TARBP2, MOV10 and EIF6; they form a large RNA-induced silencing complex (RISC).

Its subcellular location is the cytoplasm. In terms of biological role, component of the large ribosomal subunit. The ribosome is a large ribonucleoprotein complex responsible for the synthesis of proteins in the cell. The sequence is that of Large ribosomal subunit protein eL8 (Rpl7a) from Rattus norvegicus (Rat).